The sequence spans 600 residues: Pyranose dehydrogenase (600 aa).

The signal sequence occupies residues 1–25; sequence MFPRVVRLNSRLVSFALLGLQIANG. N-linked (GlcNAc...) asparagine glycosylation is found at Asn99 and Asn114. His127 is modified (tele-8alpha-FAD histidine). 5 N-linked (GlcNAc...) asparagine glycosylation sites follow: Asn199, Asn275, Asn342, Asn399, and Asn507. His535 serves as the catalytic Proton acceptor. Asn546 carries an N-linked (GlcNAc...) asparagine glycan. His579 is an active-site residue.

Belongs to the GMC oxidoreductase family. Monomer. It depends on FAD as a cofactor. N-glycosylated.

It is found in the secreted. It carries out the reaction pyranose + acceptor = pyranos-2-ulose + reduced acceptor.. The enzyme catalyses pyranose + acceptor = pyranos-3-ulose + reduced acceptor.. The catalysed reaction is pyranose + acceptor = pyranos-2,3-diulose + reduced acceptor.. It catalyses the reaction a pyranoside + acceptor = a pyranosid-3-ulose + reduced acceptor.. It carries out the reaction a pyranoside + acceptor = a pyranosid-3,4-diulose + reduced acceptor.. Catalyzes the single-oxidation or sequential double oxidation reaction of carbohydrates primarily at carbon-2 and/or carbon-3 with the concomitant reduction of the flavin. The enzyme exhibits a broad sugar substrate specificity, oxidizing different aldopyranoses to the corresponding C-1, C-2, C-3 or C-1,2, C-2,3 and C-3,4 (di)dehydro sugars with substrate-specific regioselectivity. Accepts only a narrow range of electron acceptors such as substituted benzoquinones and complexed metal ions and reacts extremely slowly with O(2) as acceptor. May play a role in the natural recycling of plant matter by oxidizing all major monosaccharides in lignocellulose and by reducing quinone compounds or reactive radical species generated during lignin depolymerization. This is Pyranose dehydrogenase from Agaricus xanthodermus (Poison yellow meadow mushroom).